The following is a 261-amino-acid chain: Succinate dehydrogenase iron-sulfur subunit (261 aa).

In terms of domain architecture, 2Fe-2S ferredoxin-type spans 28–119 (RKVQVYRYDP…DIKIYPLPHM (92 aa)). The [2Fe-2S] cluster site is built by cysteine 80, cysteine 85, and cysteine 100. A 4Fe-4S ferredoxin-type domain is found at 161–191 (DREKLDGLYECILCACCSTSCPSYWWNSDKY). [4Fe-4S] cluster is bound by residues cysteine 171, cysteine 174, and cysteine 177. Cysteine 181 serves as a coordination point for [3Fe-4S] cluster. Tryptophan 186 lines the a ubiquinone pocket. Residues cysteine 228 and cysteine 234 each contribute to the [3Fe-4S] cluster site. [4Fe-4S] cluster is bound at residue cysteine 238.

This sequence belongs to the succinate dehydrogenase/fumarate reductase iron-sulfur protein family. Part of an enzyme complex containing four subunits: a flavoprotein, an iron-sulfur, cytochrome b-556, and a hydrophobic anchor protein. Requires [2Fe-2S] cluster as cofactor. The cofactor is [3Fe-4S] cluster. [4Fe-4S] cluster is required as a cofactor.

The catalysed reaction is a quinone + succinate = fumarate + a quinol. Its pathway is carbohydrate metabolism; tricarboxylic acid cycle; fumarate from succinate (bacterial route): step 1/1. This Rickettsia typhi (strain ATCC VR-144 / Wilmington) protein is Succinate dehydrogenase iron-sulfur subunit (sdhB).